The sequence spans 154 residues: Myoglobin (154 aa).

Residues 2–148 enclose the Globin domain; it reads GLSDGEWQLV…FRNDIAAKYK (147 aa). Phosphoserine is present on serine 4. Histidine 65 provides a ligand contact to nitrite. Histidine 65 serves as a coordination point for O2. At threonine 68 the chain carries Phosphothreonine. Heme b is bound at residue histidine 94.

Belongs to the globin family. In terms of assembly, monomeric.

The protein localises to the cytoplasm. Its subcellular location is the sarcoplasm. The enzyme catalyses Fe(III)-heme b-[protein] + nitric oxide + H2O = Fe(II)-heme b-[protein] + nitrite + 2 H(+). The catalysed reaction is H2O2 + AH2 = A + 2 H2O. Monomeric heme protein which primary function is to store oxygen and facilitate its diffusion within muscle tissues. Reversibly binds oxygen through a pentacoordinated heme iron and enables its timely and efficient release as needed during periods of heightened demand. Depending on the oxidative conditions of tissues and cells, and in addition to its ability to bind oxygen, it also has a nitrite reductase activity whereby it regulates the production of bioactive nitric oxide. Under stress conditions, like hypoxia and anoxia, it also protects cells against reactive oxygen species thanks to its pseudoperoxidase activity. This is Myoglobin (MB) from Erinaceus europaeus (Western European hedgehog).